Consider the following 157-residue polypeptide: 6,7-dimethyl-8-ribityllumazine synthase (157 aa).

Residues F22, 56 to 58 (AME), and 80 to 82 (AVV) contribute to the 5-amino-6-(D-ribitylamino)uracil site. 85 to 86 (ET) contacts (2S)-2-hydroxy-3-oxobutyl phosphate. H88 acts as the Proton donor in catalysis. F113 is a 5-amino-6-(D-ribitylamino)uracil binding site. R127 serves as a coordination point for (2S)-2-hydroxy-3-oxobutyl phosphate.

The protein belongs to the DMRL synthase family.

It carries out the reaction (2S)-2-hydroxy-3-oxobutyl phosphate + 5-amino-6-(D-ribitylamino)uracil = 6,7-dimethyl-8-(1-D-ribityl)lumazine + phosphate + 2 H2O + H(+). It participates in cofactor biosynthesis; riboflavin biosynthesis; riboflavin from 2-hydroxy-3-oxobutyl phosphate and 5-amino-6-(D-ribitylamino)uracil: step 1/2. Its function is as follows. Catalyzes the formation of 6,7-dimethyl-8-ribityllumazine by condensation of 5-amino-6-(D-ribitylamino)uracil with 3,4-dihydroxy-2-butanone 4-phosphate. This is the penultimate step in the biosynthesis of riboflavin. The sequence is that of 6,7-dimethyl-8-ribityllumazine synthase from Levilactobacillus brevis (strain ATCC 367 / BCRC 12310 / CIP 105137 / JCM 1170 / LMG 11437 / NCIMB 947 / NCTC 947) (Lactobacillus brevis).